The chain runs to 165 residues: Transcriptional repressor NrdR (165 aa).

Residues 3-34 (CPFCRHPDSRVVDSREADEGQAIRRRRSCPEC) fold into a zinc finger. Positions 46 to 136 (LSVVKRSGVT…VYKSFSSAAD (91 aa)) constitute an ATP-cone domain.

The protein belongs to the NrdR family. It depends on Zn(2+) as a cofactor.

Its function is as follows. Negatively regulates transcription of bacterial ribonucleotide reductase nrd genes and operons by binding to NrdR-boxes. This is Transcriptional repressor NrdR from Rhodococcus erythropolis (strain PR4 / NBRC 100887).